Reading from the N-terminus, the 97-residue chain is uncharacterized protein (97 aa).

In terms of domain architecture, Stress-response A/B barrel spans 2-95 (IRHLVLFKLN…EFATWVIADY (94 aa)).

This is an uncharacterized protein from Streptomyces coelicolor (strain ATCC BAA-471 / A3(2) / M145).